We begin with the raw amino-acid sequence, 190 residues long: Large ribosomal subunit protein uL5 (190 aa).

The protein belongs to the universal ribosomal protein uL5 family. Part of the 50S ribosomal subunit; part of the 5S rRNA/L5/L18/L25 subcomplex. Contacts the 5S rRNA and the P site tRNA. Forms a bridge to the 30S subunit in the 70S ribosome.

In terms of biological role, this is one of the proteins that bind and probably mediate the attachment of the 5S RNA into the large ribosomal subunit, where it forms part of the central protuberance. In the 70S ribosome it contacts protein S13 of the 30S subunit (bridge B1b), connecting the 2 subunits; this bridge is implicated in subunit movement. Contacts the P site tRNA; the 5S rRNA and some of its associated proteins might help stabilize positioning of ribosome-bound tRNAs. The sequence is that of Large ribosomal subunit protein uL5 from Bifidobacterium longum (strain DJO10A).